The primary structure comprises 704 residues: Polyribonucleotide nucleotidyltransferase 4 (704 aa).

Residues Asp-483 and Asp-489 each coordinate Mg(2+). Residues 550 to 609 enclose the KH domain; sequence PRVLKMKIHPDKIRDVIGSGGKTINRIIDETGVKIDIDNDGTIFIAAESQEAVEKAIIII. The 69-residue stretch at 619–687 folds into the S1 motif domain; the sequence is GQNYTGKVIK…QQGKINLSRK (69 aa).

This sequence belongs to the polyribonucleotide nucleotidyltransferase family. Requires Mg(2+) as cofactor.

Its subcellular location is the cytoplasm. It catalyses the reaction RNA(n+1) + phosphate = RNA(n) + a ribonucleoside 5'-diphosphate. Functionally, involved in mRNA degradation. Catalyzes the phosphorolysis of single-stranded polyribonucleotides processively in the 3'- to 5'-direction. The sequence is that of Polyribonucleotide nucleotidyltransferase 4 from Alkaliphilus metalliredigens (strain QYMF).